We begin with the raw amino-acid sequence, 270 residues long: uncharacterized protein (270 aa).

The signal sequence occupies residues 1-23 (MFNFITFILFAVVCISYCHKSRG). N-linked (GlcNAc...) asparagine glycosylation is found at Asn-246 and Asn-252.

Its subcellular location is the secreted. This is an uncharacterized protein from Caenorhabditis elegans.